The chain runs to 222 residues: Voltage-dependent calcium channel gamma-1 subunit (222 aa).

Topologically, residues 1–10 (MSQTKMLKVR) are cytoplasmic. A helical transmembrane segment spans residues 11–29 (VTLFCILAGIVLAMTAVVT). Residues 30 to 108 (DHWAVLSPHM…TQKEYSISAA (79 aa)) lie on the Extracellular side of the membrane. Residues Asn-43 and Asn-79 are each glycosylated (N-linked (GlcNAc...) asparagine). A disulfide bond links Cys-57 and Cys-80. A helical membrane pass occupies residues 109-129 (AIAIFSLGFIILGSLCVLLSL). At 130-134 (GKKRD) the chain is on the cytoplasmic side. The helical transmembrane segment at 135–155 (YLLRPASMFYAFAGLCILVSV) threads the bilayer. Topologically, residues 156 to 179 (EVMRQSVKRMIDSEDTVWIEYYYS) are extracellular. A helical membrane pass occupies residues 180-204 (WSFACACAAFILLFLGGLALLLFSL). Topologically, residues 205-222 (PRMPRNPWESCMDAEPEH) are cytoplasmic.

The protein belongs to the PMP-22/EMP/MP20 family. CACNG subfamily. Component of a calcium channel complex consisting of a pore-forming alpha subunit (CACNA1S) and the ancillary subunits CACNB1 or CACNB2, CACNG1 and CACNA2D1. The channel complex contains alpha, beta, gamma and delta subunits in a 1:1:1:1 ratio, i.e. it contains either CACNB1 or CACNB2. N-glycosylated. Skeletal muscle.

It is found in the cell membrane. It localises to the sarcolemma. Regulatory subunit of the voltage-gated calcium channel that gives rise to L-type calcium currents in skeletal muscle. Regulates channel inactivation kinetics. The chain is Voltage-dependent calcium channel gamma-1 subunit (CACNG1) from Homo sapiens (Human).